A 312-amino-acid polypeptide reads, in one-letter code: Malate dehydrogenase (312 aa).

NAD(+) is bound by residues 12-17 (GAGFTG) and Asp-36. Positions 87 and 93 each coordinate substrate. Residues Asn-100 and 123 to 125 (LTN) each bind NAD(+). Asn-125 is a substrate binding site. A Phosphoserine modification is found at Ser-149. Arg-156 serves as a coordination point for substrate. His-180 acts as the Proton acceptor in catalysis.

It belongs to the LDH/MDH superfamily. MDH type 3 family.

The catalysed reaction is (S)-malate + NAD(+) = oxaloacetate + NADH + H(+). Its function is as follows. Catalyzes the reversible oxidation of malate to oxaloacetate. This Bacillus cereus (strain ZK / E33L) protein is Malate dehydrogenase.